A 715-amino-acid chain; its full sequence is MFEKLSQAACSEPFAFLGPFIDPTQGALRVWMPGATGVALVLEGQPRIALEREKESAFILKADLNLHLTHYQLAIDWNGVEQLVDDPYQYHGIYAEYDDLHTPKTMYQHMGSQFMTLERDGKSISGIRFLVYAPHATAVSLVGSFNDWDGRRHPMQRLDYGIWGLFIPDLAEGVSYKFEMKGPKGEGLPHKADPWGFYAEQYPSFASVTYDHARYQWQDAQWQTRPVTEKRKEALSFYELHAGSWKRNEQGEFLNYRELAAELVPYLVDMGYTHVELMPVSEHPFYGSWGYQPVGLFAPTSRYGSPDDFKFFVDACHQAGIGVVLDWVPAHFPSDDHGLANFDGTPLFHDPDPRRGWHQDWNSFIYDLGREQVRRFLVSNALYWFEQFHIDGIRVDAVASMLYLDYSRSHGQWIPNMDGGNENYDAIATLKWMNEEVYKYFPNAMTIAEESTAFPGVSAPTFMGGLGFGFKWNMGWMHDSLSYIKEEPVHRKYHHNTLTFPLVYAHSENYVLSLSHDEVVYGKGSIHNKMPGDEWQQTANLRAYFGYMYGQPGKKLNFMGAEIGQTAEWNHDDQLQWFLLDFPRHQGVQALTRDLNHLYRNQAALHDQDCIPAGFEWRLQDAAEQSIIAHERISEAGERILVVSNFTPVPRDEFRLGVPNKGRYQLLLNTDDSKYAGSGYEVVVDAKSEAVVSEDLAQSIVLRLPPLSTLFYKLV.

Catalysis depends on aspartate 396, which acts as the Nucleophile. Catalysis depends on glutamate 449, which acts as the Proton donor.

The protein belongs to the glycosyl hydrolase 13 family. GlgB subfamily. Monomer.

The enzyme catalyses Transfers a segment of a (1-&gt;4)-alpha-D-glucan chain to a primary hydroxy group in a similar glucan chain.. It participates in glycan biosynthesis; glycogen biosynthesis. Functionally, catalyzes the formation of the alpha-1,6-glucosidic linkages in glycogen by scission of a 1,4-alpha-linked oligosaccharide from growing alpha-1,4-glucan chains and the subsequent attachment of the oligosaccharide to the alpha-1,6 position. In Vibrio vulnificus (strain CMCP6), this protein is 1,4-alpha-glucan branching enzyme GlgB.